Here is a 658-residue protein sequence, read N- to C-terminus: Threonine--tRNA ligase (658 aa).

Residues 1-64 form the TGS domain; sequence MSNTVSLQFP…GASGKVEIIT (64 aa). The segment at 246-548 is catalytic; it reads DHRRLGREMD…LIENFAGHMP (303 aa). 3 residues coordinate Zn(2+): C343, H394, and H525.

The protein belongs to the class-II aminoacyl-tRNA synthetase family. In terms of assembly, homodimer. It depends on Zn(2+) as a cofactor.

It is found in the cytoplasm. It carries out the reaction tRNA(Thr) + L-threonine + ATP = L-threonyl-tRNA(Thr) + AMP + diphosphate + H(+). In terms of biological role, catalyzes the attachment of threonine to tRNA(Thr) in a two-step reaction: L-threonine is first activated by ATP to form Thr-AMP and then transferred to the acceptor end of tRNA(Thr). Also edits incorrectly charged L-seryl-tRNA(Thr). In Brucella melitensis biotype 1 (strain ATCC 23456 / CCUG 17765 / NCTC 10094 / 16M), this protein is Threonine--tRNA ligase.